We begin with the raw amino-acid sequence, 126 residues long: Large ribosomal subunit protein bL12 (126 aa).

This sequence belongs to the bacterial ribosomal protein bL12 family. Homodimer. Part of the ribosomal stalk of the 50S ribosomal subunit. Forms a multimeric L10(L12)X complex, where L10 forms an elongated spine to which 2 to 4 L12 dimers bind in a sequential fashion. Binds GTP-bound translation factors.

Forms part of the ribosomal stalk which helps the ribosome interact with GTP-bound translation factors. Is thus essential for accurate translation. This Beijerinckia indica subsp. indica (strain ATCC 9039 / DSM 1715 / NCIMB 8712) protein is Large ribosomal subunit protein bL12.